Reading from the N-terminus, the 116-residue chain is L-amino-acid oxidase BjussuLAAO-II (116 aa).

Residue 42-45 (GPMR) participates in FAD binding. The substrate site is built by arginine 45 and histidine 78.

The protein belongs to the flavin monoamine oxidase family. FIG1 subfamily. Homodimer; non-covalently linked. FAD is required as a cofactor. In terms of processing, glycosylated. In terms of tissue distribution, expressed by the venom gland.

The protein resides in the secreted. It carries out the reaction an L-alpha-amino acid + O2 + H2O = a 2-oxocarboxylate + H2O2 + NH4(+). The enzyme catalyses L-leucine + O2 + H2O = 4-methyl-2-oxopentanoate + H2O2 + NH4(+). It catalyses the reaction L-phenylalanine + O2 + H2O = 3-phenylpyruvate + H2O2 + NH4(+). The catalysed reaction is L-methionine + O2 + H2O = 4-methylsulfanyl-2-oxobutanoate + H2O2 + NH4(+). It carries out the reaction L-isoleucine + O2 + H2O = (S)-3-methyl-2-oxopentanoate + H2O2 + NH4(+). The enzyme catalyses L-histidine + O2 + H2O = 3-(imidazol-5-yl)pyruvate + H2O2 + NH4(+). It catalyses the reaction L-tyrosine + O2 + H2O = 3-(4-hydroxyphenyl)pyruvate + H2O2 + NH4(+). The catalysed reaction is L-tryptophan + O2 + H2O = indole-3-pyruvate + H2O2 + NH4(+). Its enzymatic activities is reduced by the presence of Zn(2+), Al(3+), Cu(2+), Na(+) or Ni(2+) salts. In terms of biological role, catalyzes an oxidative deamination of predominantly hydrophobic and aromatic L-amino acids, thus producing hydrogen peroxide that may contribute to the diverse toxic effects of this enzyme. Shows very high enzymatic activity on L-Met and L-Leu, high activity on L-Ile, L-Phe and L-Tyr and moderate activity on L-His. Exhibits diverse biological activities, such as hemorrhage, hemolysis, edema, apoptosis of vascular endothelial cells or tumor cell lines, and antibacterial, as well as regulation of platelet aggregation. Effects of snake L-amino oxidases on platelets are controversial, since they either induce aggregation or inhibit agonist-induced aggregation. These different effects are probably due to different experimental conditions. In vitro, has a strong antiprotozoal effect against Leishmania amazonensis (IC(50)=4.56 ug/mL) and Trypanosoma cruzi (IC(50)=4.85 ug/mL). It also causes cell death and DNA damage in hepatocarcinoma cells (HepG2) in vitro by inducing oxidative stress. It exerts cytotoxicity towards colorectal adenocarcinomahuman cells (Caco-2) by acting on multiple intracellular targets. It diminishes cell viability by decreasing mitochondrial activity, the activity of acid phosphatases, and lysosomal function. In addition, it increases intracellular levels of reactive oxygen species and DNA damage, it elevates the expression of the pro-inflammatory cytokine genes TNF and IL6, and lowers the expression of the apoptotic-related genes. Also induces cytotoxicity (IC(50)=1.80 ug/mL) and apoptosis in MCF-7 cells (a human breast adeno-carcinoma cell line) by activating the intrinsic and extrinsic apoptosis pathways, but are not cytotoxic towards MCF-10A cells (a non-tumorigenic human breast epithelial cell line). This chain is L-amino-acid oxidase BjussuLAAO-II, found in Bothrops jararacussu (Jararacussu).